A 155-amino-acid polypeptide reads, in one-letter code: Aspartate carbamoyltransferase regulatory chain (155 aa).

Zn(2+) is bound by residues Cys-109, Cys-114, Cys-138, and Cys-141.

Belongs to the PyrI family. Contains catalytic and regulatory chains. Zn(2+) serves as cofactor.

Its function is as follows. Involved in allosteric regulation of aspartate carbamoyltransferase. The sequence is that of Aspartate carbamoyltransferase regulatory chain from Vibrio cholerae serotype O1 (strain ATCC 39541 / Classical Ogawa 395 / O395).